The chain runs to 287 residues: MSDAQFDAALDLLRRLNPTTLQENLNNLIELQPNLAQDLLSSVDVPLSTQKDSADSNREYLCCDYNRDIDSFRSPWSNTYYPELSPKDLQDSPFPSAPLRKLEILANDSFDVYRDLYYEGGISSVYLWDLNEEDFNGHDFAGVVLFKKNQSDHSNWDSIHVFEVTTSPSSPDSFNYRVTTTIILHLDKTKTDQNSHMMLSGNLTRQTEKDIAIDMSRPLDVIFTSHVANLGSLIEDIESQMRNLLETVYFEKTRDIFHQTKNAAIASSAEEANKDAQAEVIRGLQSL.

S2 is subject to N-acetylserine. S85 and S92 each carry phosphoserine.

The protein belongs to the F-actin-capping protein beta subunit family. Component of the F-actin capping complex, composed of a heterodimer of an alpha and a beta subunit. Interacts with BSP1 (via C-terminus); leading to recruitment of the F-actin capping complex to actin cortical patches and the acomyosin contractile ring.

The protein resides in the cytoplasm. Its subcellular location is the cytoskeleton. It is found in the actin patch. It localises to the bud. The protein localises to the bud tip. Functionally, F-actin-capping proteins bind in a Ca(2+)-independent manner to the fast growing ends of actin filaments (barbed end) thereby blocking the exchange of subunits at these ends. Unlike other capping proteins (such as gelsolin and severin), these proteins do not sever actin filaments. This Saccharomyces cerevisiae (strain ATCC 204508 / S288c) (Baker's yeast) protein is F-actin-capping protein subunit beta (CAP2).